We begin with the raw amino-acid sequence, 97 residues long: YcgL domain-containing protein PputW619_3899 (97 aa).

One can recognise a YcgL domain in the interval 3 to 87 (RICSIYKSPR…AEDEYIEHLP (85 aa)).

The sequence is that of YcgL domain-containing protein PputW619_3899 from Pseudomonas putida (strain W619).